A 182-amino-acid polypeptide reads, in one-letter code: Ribulose bisphosphate carboxylase small subunit, chloroplastic 3 (182 aa).

Residues 1-41 (MASIMMNKSVVLSKECAKPLASPKVTLNKRGFATTIATKNR) constitute a chloroplast transit peptide.

It belongs to the RuBisCO small chain family. In terms of assembly, heterohexadecamer of 8 large and 8 small subunits.

The protein localises to the plastid. It localises to the chloroplast. In terms of biological role, ruBisCO catalyzes two reactions: the carboxylation of D-ribulose 1,5-bisphosphate, the primary event in carbon dioxide fixation, as well as the oxidative fragmentation of the pentose substrate. Both reactions occur simultaneously and in competition at the same active site. Although the small subunit is not catalytic it is essential for maximal activity. This Acetabularia acetabulum (Mermaid's wine glass) protein is Ribulose bisphosphate carboxylase small subunit, chloroplastic 3.